A 177-amino-acid chain; its full sequence is Large ribosomal subunit protein uL6 (177 aa).

This sequence belongs to the universal ribosomal protein uL6 family. In terms of assembly, part of the 50S ribosomal subunit.

Its function is as follows. This protein binds to the 23S rRNA, and is important in its secondary structure. It is located near the subunit interface in the base of the L7/L12 stalk, and near the tRNA binding site of the peptidyltransferase center. The sequence is that of Large ribosomal subunit protein uL6 from Rhodopseudomonas palustris (strain BisB18).